Consider the following 157-residue polypeptide: S-ribosylhomocysteine lyase (157 aa).

Residues histidine 54, histidine 58, and cysteine 124 each contribute to the Fe cation site.

Belongs to the LuxS family. Homodimer. Requires Fe cation as cofactor.

The enzyme catalyses S-(5-deoxy-D-ribos-5-yl)-L-homocysteine = (S)-4,5-dihydroxypentane-2,3-dione + L-homocysteine. Functionally, involved in the synthesis of autoinducer 2 (AI-2) which is secreted by bacteria and is used to communicate both the cell density and the metabolic potential of the environment. The regulation of gene expression in response to changes in cell density is called quorum sensing. Catalyzes the transformation of S-ribosylhomocysteine (RHC) to homocysteine (HC) and 4,5-dihydroxy-2,3-pentadione (DPD). This chain is S-ribosylhomocysteine lyase, found in Lactobacillus helveticus (strain DPC 4571).